Here is a 220-residue protein sequence, read N- to C-terminus: ATP phosphoribosyltransferase (220 aa).

The protein belongs to the ATP phosphoribosyltransferase family. Short subfamily. As to quaternary structure, heteromultimer composed of HisG and HisZ subunits.

It is found in the cytoplasm. It carries out the reaction 1-(5-phospho-beta-D-ribosyl)-ATP + diphosphate = 5-phospho-alpha-D-ribose 1-diphosphate + ATP. Its pathway is amino-acid biosynthesis; L-histidine biosynthesis; L-histidine from 5-phospho-alpha-D-ribose 1-diphosphate: step 1/9. In terms of biological role, catalyzes the condensation of ATP and 5-phosphoribose 1-diphosphate to form N'-(5'-phosphoribosyl)-ATP (PR-ATP). Has a crucial role in the pathway because the rate of histidine biosynthesis seems to be controlled primarily by regulation of HisG enzymatic activity. In Janthinobacterium sp. (strain Marseille) (Minibacterium massiliensis), this protein is ATP phosphoribosyltransferase.